A 463-amino-acid chain; its full sequence is mRNA-capping enzyme subunit alpha (463 aa).

Lysine 66 (N6-GMP-lysine intermediate) is an active-site residue. The interval 404 to 463 (WEERKSKKRTHSSISGPMLPPVAETKAPREATQSRYIDDEDWSDEADDDDEDSLKRARIE) is disordered. Residues 441–455 (DDEDWSDEADDDDED) are compositionally biased toward acidic residues.

Belongs to the eukaryotic GTase family. Heterodimer. The mRNA-capping enzyme is composed of two separate chains alpha and beta, respectively a mRNA guanylyltransferase and an mRNA 5'-triphosphate monophosphatase.

The protein resides in the nucleus. The catalysed reaction is a 5'-end diphospho-ribonucleoside in mRNA + GTP + H(+) = a 5'-end (5'-triphosphoguanosine)-ribonucleoside in mRNA + diphosphate. In terms of biological role, second step of mRNA capping. Transfer of the GMP moiety of GTP to the 5'-end of RNA via an enzyme-GMP covalent reaction intermediate. The chain is mRNA-capping enzyme subunit alpha (CEG1) from Eremothecium gossypii (strain ATCC 10895 / CBS 109.51 / FGSC 9923 / NRRL Y-1056) (Yeast).